A 129-amino-acid chain; its full sequence is uncharacterized protein (129 aa).

2 consecutive C2H2-type zinc fingers follow at residues 75 to 99 and 101 to 124; these read FVCP…YTEH and KVCP…CKKH.

Its function is as follows. Essential for virus function. This is an uncharacterized protein from Saccharolobus solfataricus (Sulfolobus solfataricus).